The following is a 162-amino-acid chain: SsrA-binding protein (162 aa).

This sequence belongs to the SmpB family.

The protein resides in the cytoplasm. Its function is as follows. Required for rescue of stalled ribosomes mediated by trans-translation. Binds to transfer-messenger RNA (tmRNA), required for stable association of tmRNA with ribosomes. tmRNA and SmpB together mimic tRNA shape, replacing the anticodon stem-loop with SmpB. tmRNA is encoded by the ssrA gene; the 2 termini fold to resemble tRNA(Ala) and it encodes a 'tag peptide', a short internal open reading frame. During trans-translation Ala-aminoacylated tmRNA acts like a tRNA, entering the A-site of stalled ribosomes, displacing the stalled mRNA. The ribosome then switches to translate the ORF on the tmRNA; the nascent peptide is terminated with the 'tag peptide' encoded by the tmRNA and targeted for degradation. The ribosome is freed to recommence translation, which seems to be the essential function of trans-translation. This chain is SsrA-binding protein, found in Colwellia psychrerythraea (strain 34H / ATCC BAA-681) (Vibrio psychroerythus).